The following is a 264-amino-acid chain: 3-methyl-2-oxobutanoate hydroxymethyltransferase (264 aa).

Mg(2+)-binding residues include aspartate 41 and aspartate 80. 3-methyl-2-oxobutanoate is bound by residues 41–42 (DS), aspartate 80, and lysine 109. A Mg(2+)-binding site is contributed by glutamate 111. Residue glutamate 178 is the Proton acceptor of the active site.

The protein belongs to the PanB family. Homodecamer; pentamer of dimers. Mg(2+) is required as a cofactor.

Its subcellular location is the cytoplasm. It carries out the reaction 3-methyl-2-oxobutanoate + (6R)-5,10-methylene-5,6,7,8-tetrahydrofolate + H2O = 2-dehydropantoate + (6S)-5,6,7,8-tetrahydrofolate. The protein operates within cofactor biosynthesis; (R)-pantothenate biosynthesis; (R)-pantoate from 3-methyl-2-oxobutanoate: step 1/2. In terms of biological role, catalyzes the reversible reaction in which hydroxymethyl group from 5,10-methylenetetrahydrofolate is transferred onto alpha-ketoisovalerate to form ketopantoate. The protein is 3-methyl-2-oxobutanoate hydroxymethyltransferase of Thermosipho melanesiensis (strain DSM 12029 / CIP 104789 / BI429).